The following is a 408-amino-acid chain: Succinylornithine transaminase (408 aa).

Lysine 252 carries the N6-(pyridoxal phosphate)lysine modification.

Belongs to the class-III pyridoxal-phosphate-dependent aminotransferase family. AstC subfamily. The cofactor is pyridoxal 5'-phosphate.

The enzyme catalyses N(2)-succinyl-L-ornithine + 2-oxoglutarate = N-succinyl-L-glutamate 5-semialdehyde + L-glutamate. The protein operates within amino-acid degradation; L-arginine degradation via AST pathway; L-glutamate and succinate from L-arginine: step 3/5. Functionally, catalyzes the transamination of N(2)-succinylornithine and alpha-ketoglutarate into N(2)-succinylglutamate semialdehyde and glutamate. Can also act as an acetylornithine aminotransferase. This chain is Succinylornithine transaminase, found in Salmonella enteritidis PT4 (strain P125109).